We begin with the raw amino-acid sequence, 799 residues long: Ribosome-releasing factor 2, mitochondrial (799 aa).

A tr-type G domain is found at 19–306 (SKIRNIGIIA…AVVNYLPSPL (288 aa)). Residues 28 to 35 (AHIDAGKT), 93 to 97 (DTPGH), and 145 to 148 (NKMD) contribute to the GTP site.

Belongs to the TRAFAC class translation factor GTPase superfamily. Classic translation factor GTPase family. EF-G/EF-2 subfamily.

It is found in the mitochondrion. Mitochondrial GTPase that mediates the disassembly of ribosomes from messenger RNA at the termination of mitochondrial protein biosynthesis. Not involved in the GTP-dependent ribosomal translocation step during translation elongation. This chain is Ribosome-releasing factor 2, mitochondrial, found in Vanderwaltozyma polyspora (strain ATCC 22028 / DSM 70294 / BCRC 21397 / CBS 2163 / NBRC 10782 / NRRL Y-8283 / UCD 57-17) (Kluyveromyces polysporus).